A 210-amino-acid polypeptide reads, in one-letter code: 3-oxo-tetronate 4-phosphate decarboxylase (210 aa).

The active-site Proton acceptor is the E74. The Zn(2+) site is built by E74, H93, and H95. The active-site Proton donor is Y120. Residue H160 participates in Zn(2+) binding.

Belongs to the aldolase class II family. AraD/FucA subfamily. It depends on Zn(2+) as a cofactor.

The catalysed reaction is 3-dehydro-4-O-phospho-D-erythronate + H(+) = dihydroxyacetone phosphate + CO2. The enzyme catalyses 3-dehydro-4-O-phospho-L-erythronate + H(+) = dihydroxyacetone phosphate + CO2. Catalyzes the decarboxylation of 3-oxo-tetronate 4-phosphate to dihydroxyacetone phosphate (DHAP) and CO(2). The protein is 3-oxo-tetronate 4-phosphate decarboxylase of Haemophilus influenzae (strain ATCC 51907 / DSM 11121 / KW20 / Rd).